The sequence spans 1172 residues: DNA-directed RNA polymerases IV and V subunit 2 (1172 aa).

Position 786 (aspartate 786) interacts with Mg(2+). Zn(2+) contacts are provided by cysteine 1108, cysteine 1111, cysteine 1133, and cysteine 1136. The C4-type zinc-finger motif lies at cysteine 1108–cysteine 1136.

This sequence belongs to the RNA polymerase beta chain family. In terms of assembly, component of the RNA polymerase IV and V complexes. Interacts with SSH1, NRPD1 and NRPE1. In terms of tissue distribution, mostly expressed in seedlings, flowers and roots, present ubiquitously, except in sperm cells.

It localises to the nucleus. It carries out the reaction RNA(n) + a ribonucleoside 5'-triphosphate = RNA(n+1) + diphosphate. DNA-dependent RNA polymerase catalyzes the transcription of DNA into RNA using the four ribonucleoside triphosphates as substrates. Second largest component of RNA polymerases IV and V which mediate short-interfering RNAs (siRNA) accumulation and subsequent RNA-directed DNA methylation-dependent (RdDM) transcriptional gene silencing (TGS) of endogenous repeated sequences, including transposable elements. Proposed to contribute to the polymerase catalytic activity and forms the polymerase active center together with the largest subunit. Also required for full erasure of methylation when the RNA trigger is withdrawn. Required for intercellular RNA interference (RNAi) leading to systemic post-transcriptional gene silencing. Involved in the maintenance of post-transcriptional RNA silencing. During interphase, mediates siRNA-independent heterochromatin association and methylation into chromocenters and condensation and cytosine methylation at pericentromeric major repeats. Required for complete maintenance of the 35S promoter homology-dependent TGS in transgenic plants and for the initial establishment of DNA methylation. The polypeptide is DNA-directed RNA polymerases IV and V subunit 2 (NRPD2) (Arabidopsis thaliana (Mouse-ear cress)).